The following is a 371-amino-acid chain: GDP-mannose transporter (371 aa).

Over 1–51 (MGVISFYLIGQLLYLIRKKYTTTYRQQQQHQYNMDSKHSTSSSSSGSLATR) the chain is Cytoplasmic. Residues 52-72 (ISNSGPISIAAYCLSSILMTV) traverse the membrane as a helical segment. At 73–80 (TNKYVLSG) the chain is on the lumenal side. Residues 81–101 (FSFNLNFFLLAVQSIVCIVTI) traverse the membrane as a helical segment. The Cytoplasmic portion of the chain corresponds to 102 to 121 (GSLKSLNIITYRQFNKDEAK). The chain crosses the membrane as a helical span at residues 122-138 (KWSPIAFLLVAMIYTSS). Residues 139 to 145 (KALQYLS) are Lumenal-facing. Residues 146–162 (IPVYTIFKNLTIILIAY) form a helical membrane-spanning segment. Residues 163–171 (GEVIWFGGK) are Cytoplasmic-facing. Residues 172 to 192 (VTTMALSSFLLMVLSSVIAYY) traverse the membrane as a helical segment. Topologically, residues 193–206 (GDNAAVKSHDDAFA) are lumenal. A helical membrane pass occupies residues 207–227 (LYLGYFWMLTNCFASAAFVLI). At 228–241 (MRKRIKLTNFKDFD) the chain is on the cytoplasmic side. Residues 242–262 (TMYYNNLLSIPILLICSFIFE) form a helical membrane-spanning segment. Residues 263–281 (DWSSANVSLNFPADNRVTT) are Lumenal-facing. A glycan (N-linked (GlcNAc...) asparagine) is linked at asparagine 268. A helical membrane pass occupies residues 282-302 (ITAMILSGASSVGISYCSAWC). Residues 303–309 (VRVTSST) are Cytoplasmic-facing. A helical transmembrane segment spans residues 310–329 (TYSMVGALNKLPIALSGLIF). Over 330–332 (FEA) the chain is Lumenal. A helical membrane pass occupies residues 333 to 355 (AVNFWSVSSIFVGFGAGLVYAVA). Residues 356 to 371 (KQKQQKEQSQQLPTTK) are Cytoplasmic-facing.

The protein belongs to the TPT transporter family. SLC35D subfamily. In terms of assembly, homooligomer.

The protein resides in the golgi apparatus membrane. The protein localises to the cytoplasmic vesicle membrane. Its subcellular location is the endoplasmic reticulum membrane. In terms of biological role, involved in the import of GDP-mannose from the cytoplasm into the Golgi lumen. Involved in hyphal formation. The protein is GDP-mannose transporter (VRG4) of Candida albicans (strain SC5314 / ATCC MYA-2876) (Yeast).